A 344-amino-acid polypeptide reads, in one-letter code: MGFNLTFHLSYKFRLLLLLTLCLTVVGWATSNYFVGAIQEIPKAKEFMANFHKTLILGKGKTLTNEASTKKVELDNCPSVSPYLRGQSKLIFKPDLTLEEVQAENPKVSRGRYRPQECKALQRVAILVPHRNREKHLMYLLEHLHPFLQRQQLDYGIYVIHQAEGKKFNRAKLLNVGYLEALKEENWDCFIFHDVDLVPENDFNLYKCEEHPKHLVVGRNSTGYRLRYSGYFGGVTALSREQFFKVNGFSNNYWGWGGEDDDLRLRVELQRMKISRPLPEVGKYTMVFHTRDKGNEVNAERMKLLHQVSRVWRTDGLSSCSYKLVSVEHNPLYINITVDFWFGA.

Residues 1–12 (MGFNLTFHLSYK) are Cytoplasmic-facing. A helical; Signal-anchor for type II membrane protein membrane pass occupies residues 13 to 38 (FRLLLLLTLCLTVVGWATSNYFVGAI). At 39–344 (QEIPKAKEFM…NITVDFWFGA (306 aa)) the chain is on the lumenal side. Residues Cys77 and Cys118 are joined by a disulfide bond. Residues 129-133 (PHRNR), 168-170 (FNR), and 195-196 (VD) each bind UDP-alpha-D-galactose. A disulfide bridge links Cys189 with Cys208. Asp196 contacts Mn(2+). Residue Asn220 is glycosylated (N-linked (GlcNAc...) asparagine). Positions 224 and 256 each coordinate UDP-alpha-D-galactose. 258 to 261 (GEDD) serves as a coordination point for N-acetyl-D-glucosamine. His289 contacts Mn(2+). Position 289-291 (289-291 (HTR)) interacts with UDP-alpha-D-galactose. Arg301 serves as a coordination point for N-acetyl-D-glucosamine. The N-linked (GlcNAc...) asparagine glycan is linked to Asn335.

It belongs to the glycosyltransferase 7 family. In terms of assembly, interacts with SLC35A2 (isoform 2; UGT1). Mn(2+) serves as cofactor. Post-translationally, N-glycosylated. Highest expression is observed in placenta, pancreas, kidney and heart. Expressed in corneal epithelial cells.

It is found in the golgi apparatus membrane. The protein resides in the secreted. It carries out the reaction N-acetyl-D-glucosamine + UDP-alpha-D-galactose = beta-D-galactosyl-(1-&gt;4)-N-acetyl-D-glucosamine + UDP + H(+). It catalyses the reaction a beta-D-GlcNAc-(1-&gt;3)-beta-D-Gal-(1-&gt;4)-beta-D-Glc-(1&lt;-&gt;1)-Cer(d18:1(4E)) + UDP-alpha-D-galactose = a neolactoside nLc4Cer(d18:1(4E)) + UDP + H(+). The enzyme catalyses 3-O-{beta-D-galactosyl-(1-&gt;3)-[6-O-sulfo-N-acetyl-beta-D-glucosaminyl-(1-&gt;6)]-N-acetyl-alpha-D-galactosaminyl}-L-seryl-[protein] + UDP-alpha-D-galactose = 3-O-{beta-D-galactosyl-(1-&gt;3)-[beta-D-galactosyl-(1-&gt;4)-6-O-sulfo-N-acetyl-beta-D-glucosaminyl-(1-&gt;6)]-N-acetyl-alpha-D-galactosaminyl}-L-seryl-[protein] + UDP + H(+). The catalysed reaction is 3-O-{beta-D-galactosyl-(1-&gt;3)-[6-O-sulfo-N-acetyl-beta-D-glucosaminyl-(1-&gt;6)]-N-acetyl-alpha-D-galactosaminyl}-L-threonyl-[protein] + UDP-alpha-D-galactose = 3-O-{beta-D-galactosyl-(1-&gt;3)-[beta-D-galactosyl-(1-&gt;4)-6-O-sulfo-N-acetyl-beta-D-glucosaminyl-(1-&gt;6)]-N-acetyl-alpha-D-galactosaminyl}-L-threonyl-[protein] + UDP + H(+). Its pathway is protein modification; protein glycosylation. It functions in the pathway glycolipid biosynthesis. Up-regulated by LALBA. Functionally, galactose (Gal) transferase involved in the synthesis of terminal N-acetyllactosamine (LacNac) unit present on glycan chains of glycoproteins and glycosphingolipids. Catalyzes the transfer of Gal residue via a beta1-&gt;4 linkage from UDP-Gal to the non-reducing terminal N-acetyl glucosamine 6-O-sulfate (6-O-sulfoGlcNAc) in the linearly growing chain of both N- and O-linked keratan sulfate proteoglycans. Cooperates with B3GNT7 N-acetyl glucosamine transferase and CHST6 and CHST1 sulfotransferases to construct and elongate mono- and disulfated disaccharide units [-&gt;3Galbeta1-&gt;4(6-sulfoGlcNAcbeta)1-&gt;] and [-&gt;3(6-sulfoGalbeta)1-&gt;4(6-sulfoGlcNAcbeta)1-&gt;] within keratan sulfate polymer. Transfers Gal residue via a beta1-&gt;4 linkage to terminal 6-O-sulfoGlcNAc within the LacNac unit of core 2 O-glycans forming 6-sulfo-sialyl-Lewis X (sLex). May contribute to the generation of sLex epitope on mucin-type glycoproteins that serve as ligands for SELL/L-selectin, a major regulator of leukocyte migration. In the biosynthesis pathway of neolacto-series glycosphingolipids, transfers Gal residue via a beta1-&gt;4 linkage to terminal GlcNAc of a lactotriaosylceramide (Lc3Cer) acceptor to form a neolactotetraosylceramide. The sequence is that of Beta-1,4-galactosyltransferase 4 from Homo sapiens (Human).